The chain runs to 428 residues: Kynureninase (428 aa).

Pyridoxal 5'-phosphate contacts are provided by residues Thr-104, Thr-105, 132–135 (FPSD), Asp-213, His-216, and Tyr-238. Lys-239 bears the N6-(pyridoxal phosphate)lysine mark. Residues Trp-267 and Thr-295 each contribute to the pyridoxal 5'-phosphate site.

This sequence belongs to the kynureninase family. In terms of assembly, homodimer. Requires pyridoxal 5'-phosphate as cofactor.

The catalysed reaction is L-kynurenine + H2O = anthranilate + L-alanine + H(+). It catalyses the reaction 3-hydroxy-L-kynurenine + H2O = 3-hydroxyanthranilate + L-alanine + H(+). The protein operates within amino-acid degradation; L-kynurenine degradation; L-alanine and anthranilate from L-kynurenine: step 1/1. Its pathway is cofactor biosynthesis; NAD(+) biosynthesis; quinolinate from L-kynurenine: step 2/3. Its function is as follows. Catalyzes the cleavage of L-kynurenine (L-Kyn) and L-3-hydroxykynurenine (L-3OHKyn) into anthranilic acid (AA) and 3-hydroxyanthranilic acid (3-OHAA), respectively. This chain is Kynureninase, found in Bacillus cereus (strain ZK / E33L).